Consider the following 409-residue polypeptide: Patellin-6 (409 aa).

The region spanning 116 to 294 is the CRAL-TRIO domain; it reads EKLTEEDLGF…QYGGLSRPTD (179 aa). The 135-residue stretch at 270–404 folds into the GOLD domain; that stretch reads AETLYKFIRP…VAAYRYTVRK (135 aa).

Belongs to the patellin family.

It localises to the membrane. It is found in the cytoplasm. In terms of biological role, carrier protein that may be involved in membrane-trafficking events associated with cell-plate formation during cytokinesis. Binds to some hydrophobic molecules such as phosphoinositides and promotes their transfer between the different cellular sites. This Arabidopsis thaliana (Mouse-ear cress) protein is Patellin-6 (PATL6).